Consider the following 445-residue polypeptide: Chromosome partition protein MukF (445 aa).

Positions 213 to 241 are leucine-zipper; it reads LSETSATLKELQDTLQAAGDELQTQILDI.

Belongs to the MukF family. Interacts, and probably forms a ternary complex, with MukE and MukB via its C-terminal region. The complex formation is stimulated by calcium or magnesium. It is required for an interaction between MukE and MukB.

Its subcellular location is the cytoplasm. The protein resides in the nucleoid. In terms of biological role, involved in chromosome condensation, segregation and cell cycle progression. May participate in facilitating chromosome segregation by condensation DNA from both sides of a centrally located replisome during cell division. Not required for mini-F plasmid partitioning. Probably acts via its interaction with MukB and MukE. Overexpression results in anucleate cells. It has a calcium binding activity. This is Chromosome partition protein MukF from Vibrio atlanticus (strain LGP32) (Vibrio splendidus (strain Mel32)).